Here is a 101-residue protein sequence, read N- to C-terminus: Small ribosomal subunit protein uS14 (101 aa).

The protein belongs to the universal ribosomal protein uS14 family. In terms of assembly, part of the 30S ribosomal subunit. Contacts proteins S3 and S10.

Its function is as follows. Binds 16S rRNA, required for the assembly of 30S particles and may also be responsible for determining the conformation of the 16S rRNA at the A site. The sequence is that of Small ribosomal subunit protein uS14 from Pseudomonas putida (strain W619).